The sequence spans 96 residues: Prokineticin Bv8 (96 aa).

The signal sequence occupies residues 1–19 (MKCFAQIVVLLLVIAFSHG). The interval 20–24 (AVITG) is may be important for binding to prokineticin receptor 2. Intrachain disulfides connect Cys26/Cys38, Cys32/Cys50, Cys37/Cys78, Cys60/Cys86, and Cys80/Cys95.

As to expression, expressed by the skin glands.

The protein resides in the secreted. In terms of biological role, potent agonist for both PKR1/PROKR1 and PKR2/PROKR2, and inducer of a potent and long-lasting hyperalgesia. Shows an EC(50) of 0.264 nM, when tested on neuroblastoma cells (SH-SY5Y) which endogenously express mainly PKR2/PROKR2. Also potentiates capsaicin-induced TRPV1 current, when tested on DRG neurons. Induces a biphasic hyperalgesia to tactile and thermal stimuli after systemic injection of this protein into rat. The initial phase of hyperalgesia is caused by a local action on nociceptors, because intraplantar injection of this protein causes a strong and localized hyperalgesia with a similar time course to that of the initial phase of hyperalgesia seen with systemic injection. The secondary phase of hyperalgesia is not seen with local intraplantar injection and is therefore probably attributable to a central action of this protein. At subnanomolar concentrations, this protein both induces potent chemotaxis of macrophages and stimulates LPS-induced production of the pro-inflammatory cytokines IL-1 and IL-12. In vivo, this protein potently stimulates the contraction of the guinea-pig gastrointestinal (GI) smooth muscle (at nanomolar concentration). This is Prokineticin Bv8 from Bombina variegata (Yellow-bellied toad).